Here is a 152-residue protein sequence, read N- to C-terminus: Nucleoplasmin-like protein (152 aa).

The span at 109-128 (EVVDMEEDDEEDDVAEDEED) shows a compositional bias: acidic residues. The interval 109-152 (EVVDMEEDDEEDDVAEDEEDEHPKKRAKIENAADGKNAKNNKKK) is disordered. The segment covering 136 to 145 (KIENAADGKN) has biased composition (basic and acidic residues).

This sequence belongs to the nucleoplasmin family. Decamer formed by two pentameric rings associated in a head-to-head fashion.

The protein localises to the nucleus. Its function is as follows. Binds to core histones and functions in the ATP-facilitated assembly of approximately regularly spaced nucleosomal arrays. May participate in parallel with other histone-binding proteins such as NAP-1. Functionally, inactive for chromatin assembly. In vitro it appears to form a high molecular mass aggregate with the core histones. This chain is Nucleoplasmin-like protein (Nlp), found in Drosophila melanogaster (Fruit fly).